The primary structure comprises 752 residues: Zinc finger BED domain-containing protein RICESLEEPER 3 (752 aa).

The BED-type zinc finger occupies Arg-106–Asp-166. Positions 129, 132, 153, and 159 each coordinate Zn(2+). The segment at Glu-647–Leu-733 is HATC (Hobo-Ac-Tam3) domain.

Homodimer.

The protein resides in the nucleus. Transposase-like protein that is essential for plant growth and development. May regulate global gene expression by recruiting other cellular factors. This is Zinc finger BED domain-containing protein RICESLEEPER 3 from Oryza sativa subsp. japonica (Rice).